Consider the following 493-residue polypeptide: UDP-N-acetylmuramate--L-alanine ligase (493 aa).

An ATP-binding site is contributed by G112 to T118.

The protein belongs to the MurCDEF family.

It localises to the cytoplasm. It catalyses the reaction UDP-N-acetyl-alpha-D-muramate + L-alanine + ATP = UDP-N-acetyl-alpha-D-muramoyl-L-alanine + ADP + phosphate + H(+). Its pathway is cell wall biogenesis; peptidoglycan biosynthesis. Its function is as follows. Cell wall formation. The protein is UDP-N-acetylmuramate--L-alanine ligase of Nitrosospira multiformis (strain ATCC 25196 / NCIMB 11849 / C 71).